Here is a 205-residue protein sequence, read N- to C-terminus: Glycerol-3-phosphate acyltransferase (205 aa).

5 consecutive transmembrane segments (helical) span residues 13–33 (LLALAALIGYLLGSIPFGLIL), 68–88 (LLLDALKGTAAVLVANALWGY), 90–110 (ASLVAGFFAFLGHLFPVWLGF), 120–140 (IGVLLGAAPLMMLAFALIWLA), and 147–167 (YSSLSALLAMLIIPVALWVLG).

This sequence belongs to the PlsY family. Probably interacts with PlsX.

It is found in the cell inner membrane. It carries out the reaction an acyl phosphate + sn-glycerol 3-phosphate = a 1-acyl-sn-glycero-3-phosphate + phosphate. Its pathway is lipid metabolism; phospholipid metabolism. Functionally, catalyzes the transfer of an acyl group from acyl-phosphate (acyl-PO(4)) to glycerol-3-phosphate (G3P) to form lysophosphatidic acid (LPA). This enzyme utilizes acyl-phosphate as fatty acyl donor, but not acyl-CoA or acyl-ACP. This chain is Glycerol-3-phosphate acyltransferase, found in Agrobacterium fabrum (strain C58 / ATCC 33970) (Agrobacterium tumefaciens (strain C58)).